Consider the following 88-residue polypeptide: Small ribosomal subunit protein uS15c (88 aa).

The protein belongs to the universal ribosomal protein uS15 family. As to quaternary structure, part of the 30S ribosomal subunit.

The protein localises to the plastid. Its subcellular location is the chloroplast. This Arabidopsis thaliana (Mouse-ear cress) protein is Small ribosomal subunit protein uS15c (rps15).